Consider the following 328-residue polypeptide: MNNSAFTFQTLHPDTIMDALFKQGIRVDSGLTPLNSYENRVYQFQDEERRRFVVKFYRPERWTADQILEEHQFALQLVNDEVPVAAPVAFNGQTLLNHQGFYFAVFPSVGGRQFEADNIDQMEAVGRYLGRMHQTGRKQLFIHRPTIGLNEYLIEPRKLFEDATLIPSGLKAAFLKATDELIAAVTAHWREDFTVLRLHGDCHAGNILWRDGPMFVDLDDARNGPAIQDLWMLLNGDKAQQRMQLETIIEAYEEFSEFDTAEIGLIEPLRAMRLVYYLAWLMRHWADPAFPKNFPWLTGEDYWLRQTATFIEQAKVLQEPPLQLTPMY.

D201 serves as the catalytic Proton acceptor. N206 and D217 together coordinate Mg(2+). D217 is an active-site residue.

It belongs to the SrkA/RdoA protein kinase family. In terms of assembly, monomer. The cofactor is Mg(2+).

Its subcellular location is the cytoplasm. It catalyses the reaction L-seryl-[protein] + ATP = O-phospho-L-seryl-[protein] + ADP + H(+). The enzyme catalyses L-threonyl-[protein] + ATP = O-phospho-L-threonyl-[protein] + ADP + H(+). In terms of biological role, a protein kinase that phosphorylates Ser and Thr residues. Probably acts to suppress the effects of stress linked to accumulation of reactive oxygen species. Probably involved in the extracytoplasmic stress response. Also has a role in LPS synthesis, through regulation of the galETK expression. A protein kinase that phosphorylates Ser and Thr residues. Probably acts to suppress the effects of stress linked to accumulation of reactive oxygen species. Probably involved in the extracytoplasmic stress response. This is Stress response kinase A from Shigella flexneri.